A 355-amino-acid chain; its full sequence is Transcription factor TGAL9 (355 aa).

Disordered regions lie at residues 83–104 (FPSQ…MAAI) and 118–188 (GSSK…DAKT). Residues 118–134 (GSSKRPPAAAAAGGQPS) show a composition bias toward low complexity. A compositionally biased stretch (polar residues) spans 135 to 144 (RLNNPADQPS). Composition is skewed to basic and acidic residues over residues 148–159 (KDGKAAVVKKEG) and 176–188 (SEHE…DAKT). A bZIP domain is found at 185–230 (DAKTLRRLAQNREAARKSRLRKKAYIQNLETSRIRLSQLEQELVQR). A basic motif region spans residues 187-207 (KTLRRLAQNREAARKSRLRKK). A leucine-zipper region spans residues 213–227 (LETSRIRLSQLEQEL). In terms of domain architecture, DOG1 spans 254 to 355 (AAWFDGEYAR…RPSELIKVST (102 aa)).

This sequence belongs to the bZIP family. In terms of assembly, interacts with NPR5/NH4, NH5.1 and NH5.2.

It localises to the nucleus. Its function is as follows. Transcriptional regulator involved in defense response. This Oryza sativa subsp. japonica (Rice) protein is Transcription factor TGAL9.